We begin with the raw amino-acid sequence, 218 residues long: Cytidylate kinase (218 aa).

11-19 (GPGASGKGT) is an ATP binding site.

The protein belongs to the cytidylate kinase family. Type 1 subfamily.

The protein resides in the cytoplasm. It carries out the reaction CMP + ATP = CDP + ADP. The enzyme catalyses dCMP + ATP = dCDP + ADP. This chain is Cytidylate kinase, found in Neisseria meningitidis serogroup B (strain ATCC BAA-335 / MC58).